We begin with the raw amino-acid sequence, 1657 residues long: Ras GTPase-activating-like protein IQGAP1 (1657 aa).

At Ser2 the chain carries N-acetylserine. At Ser2 the chain carries Phosphoserine. In terms of domain architecture, Calponin-homology (CH) spans 44–159 (LCHLEEAKRW…YCIHALSLYL (116 aa)). The residue at position 172 (Tyr172) is a Phosphotyrosine. Phosphoserine is present on Ser330. A WW domain is found at 685 to 710 (WVKHWVKGGYHYYHNLETQAGGWAEP). 4 IQ domains span residues 745 to 774 (NEGL…FLKK), 775 to 804 (QIPA…YLHS), 805 to 834 (HKDE…YFRD), and 835 to 864 (HIND…AEDP). A C1 region spans residues 956–1274 (GGLKALSKEK…FFQVACDVPE (319 aa)). Residues 1020-1269 (YLLLRLFQTA…QKFRRFFQVA (250 aa)) enclose the Ras-GAP domain. Residues 1276–1657 (QDKFNVDEYS…FLLNKKFYGK (382 aa)) are C2. Residue Ser1441 is modified to Phosphoserine.

Interacts with CDC42; the interaction is demonstrated with IQGAP1 in GTP-bound and in nucleotide-free state. Interacts with RAC1. Does not interact with RHOA. Interacts with TSG101. Interacts with PAK6. Interacts with SASH1. Interacts with PJVK. Interacts with SLC26A4. This interaction enhances the chloride-bicarbonate exchange activity of SLC26A4. Interacts with SVEP1. Interacts with ILK; the interaction is required for localization of IQGAP to the cell cortex. As to quaternary structure, (Microbial infection) In case of infection, interacts with S.typhimurium protein sseI. In terms of tissue distribution, expressed in the kidney (at protein level).

The protein localises to the cell membrane. The protein resides in the nucleus. It is found in the cytoplasm. It localises to the cell cortex. Its subcellular location is the apical cell membrane. The protein localises to the basolateral cell membrane. Plays a crucial role in regulating the dynamics and assembly of the actin cytoskeleton. Recruited to the cell cortex by interaction with ILK which allows it to cooperate with its effector DIAPH1 to locally stabilize microtubules and allow stable insertion of caveolae into the plasma membrane. Binds to activated CDC42 but does not stimulate its GTPase activity. Associates with calmodulin. May promote neurite outgrowth. May play a possible role in cell cycle regulation by contributing to cell cycle progression after DNA replication arrest. The sequence is that of Ras GTPase-activating-like protein IQGAP1 (Iqgap1) from Mus musculus (Mouse).